The sequence spans 191 residues: Orotate phosphoribosyltransferase (191 aa).

114-122 serves as a coordination point for 5-phospho-alpha-D-ribose 1-diphosphate; that stretch reads EDVVTTGKS. Residues Thr118 and Arg146 each coordinate orotate.

This sequence belongs to the purine/pyrimidine phosphoribosyltransferase family. PyrE subfamily. Homodimer. It depends on Mg(2+) as a cofactor.

It carries out the reaction orotidine 5'-phosphate + diphosphate = orotate + 5-phospho-alpha-D-ribose 1-diphosphate. Its pathway is pyrimidine metabolism; UMP biosynthesis via de novo pathway; UMP from orotate: step 1/2. Its function is as follows. Catalyzes the transfer of a ribosyl phosphate group from 5-phosphoribose 1-diphosphate to orotate, leading to the formation of orotidine monophosphate (OMP). The protein is Orotate phosphoribosyltransferase of Clostridium botulinum (strain Langeland / NCTC 10281 / Type F).